The sequence spans 107 residues: Quaternary ammonium compound-resistance protein QacC (107 aa).

Topologically, residues 1–2 (MP) are cytoplasmic. A helical membrane pass occupies residues 3–20 (YIYLIIAISTEVIGSAFL). Topologically, residues 21–29 (KSSEGFSKF) are extracellular. The chain crosses the membrane as a helical span at residues 30–47 (IPSLGTIISFGICFYFLS). At 48-56 (KTMQHLPLN) the chain is on the cytoplasmic side. A helical transmembrane segment spans residues 57–75 (ITYATWAGLGLVLTTVVSI). Over 76-85 (IIFKEQINLI) the chain is Extracellular. A helical membrane pass occupies residues 86 to 103 (TIVSIVLIIVGVVSLNIF). At 104 to 107 (GTSH) the chain is on the cytoplasmic side.

This sequence belongs to the drug/metabolite transporter (DMT) superfamily. Small multidrug resistance (SMR) (TC 2.A.7.1) family.

It localises to the cell membrane. Its activity is regulated as follows. Ethidium export is inhibited by N-ethylmaleimide (NEM). In terms of biological role, multidrug exporter. Is implicated for the resistance to bacteriocidal quaternary ammonium compounds and ethidium bromide. This is Quaternary ammonium compound-resistance protein QacC from Staphylococcus aureus.